The sequence spans 244 residues: 3-deoxy-manno-octulosonate cytidylyltransferase (244 aa).

The protein belongs to the KdsB family.

The protein localises to the cytoplasm. It catalyses the reaction 3-deoxy-alpha-D-manno-oct-2-ulosonate + CTP = CMP-3-deoxy-beta-D-manno-octulosonate + diphosphate. The protein operates within nucleotide-sugar biosynthesis; CMP-3-deoxy-D-manno-octulosonate biosynthesis; CMP-3-deoxy-D-manno-octulosonate from 3-deoxy-D-manno-octulosonate and CTP: step 1/1. It participates in bacterial outer membrane biogenesis; lipopolysaccharide biosynthesis. Its function is as follows. Activates KDO (a required 8-carbon sugar) for incorporation into bacterial lipopolysaccharide in Gram-negative bacteria. In Synechococcus elongatus (strain ATCC 33912 / PCC 7942 / FACHB-805) (Anacystis nidulans R2), this protein is 3-deoxy-manno-octulosonate cytidylyltransferase.